Reading from the N-terminus, the 78-residue chain is Conotoxin Cl14.9 (78 aa).

The N-terminal stretch at Met-1 to Ser-22 is a signal peptide. The propeptide occupies Ala-23–Arg-47. Ile-70 carries the isoleucine amide modification. Residues Asp-74 to Gln-78 constitute a propeptide that is removed on maturation.

Contains 2 disulfide bonds. In terms of tissue distribution, expressed by the venom duct.

The protein localises to the secreted. The chain is Conotoxin Cl14.9 from Californiconus californicus (California cone).